The chain runs to 353 residues: Photosystem II protein D1 (353 aa).

T2 bears the N-acetylthreonine mark. Phosphothreonine is present on T2. 3 consecutive transmembrane segments (helical) span residues 29–46 (YIGW…TATS), 118–133 (HFLL…EWEL), and 142–156 (WIAV…AATA). H118 contributes to the chlorophyll a binding site. Residue Y126 participates in pheophytin a binding. [CaMn4O5] cluster is bound by residues D170 and E189. The chain crosses the membrane as a helical span at residues 197 to 218 (FHMLGVAGVFGGSLFSAMHGSL). H198 is a chlorophyll a binding site. A quinone contacts are provided by residues H215 and 264–265 (SF). Residue H215 coordinates Fe cation. A Fe cation-binding site is contributed by H272. Residues 274-288 (FLAAWPVVGIWFTAL) traverse the membrane as a helical segment. [CaMn4O5] cluster-binding residues include H332, E333, D342, and A344. Residues 345–353 (SVEAPSINA) constitute a propeptide that is removed on maturation.

This sequence belongs to the reaction center PufL/M/PsbA/D family. As to quaternary structure, PSII is composed of 1 copy each of membrane proteins PsbA, PsbB, PsbC, PsbD, PsbE, PsbF, PsbH, PsbI, PsbJ, PsbK, PsbL, PsbM, PsbT, PsbX, PsbY, PsbZ, Psb30/Ycf12, at least 3 peripheral proteins of the oxygen-evolving complex and a large number of cofactors. It forms dimeric complexes. It depends on The D1/D2 heterodimer binds P680, chlorophylls that are the primary electron donor of PSII, and subsequent electron acceptors. It shares a non-heme iron and each subunit binds pheophytin, quinone, additional chlorophylls, carotenoids and lipids. D1 provides most of the ligands for the Mn4-Ca-O5 cluster of the oxygen-evolving complex (OEC). There is also a Cl(-1) ion associated with D1 and D2, which is required for oxygen evolution. The PSII complex binds additional chlorophylls, carotenoids and specific lipids. as a cofactor. In terms of processing, tyr-161 forms a radical intermediate that is referred to as redox-active TyrZ, YZ or Y-Z. C-terminally processed by CTPA; processing is essential to allow assembly of the oxygen-evolving complex and thus photosynthetic growth.

The protein localises to the plastid. Its subcellular location is the chloroplast thylakoid membrane. It catalyses the reaction 2 a plastoquinone + 4 hnu + 2 H2O = 2 a plastoquinol + O2. Its function is as follows. Photosystem II (PSII) is a light-driven water:plastoquinone oxidoreductase that uses light energy to abstract electrons from H(2)O, generating O(2) and a proton gradient subsequently used for ATP formation. It consists of a core antenna complex that captures photons, and an electron transfer chain that converts photonic excitation into a charge separation. The D1/D2 (PsbA/PsbD) reaction center heterodimer binds P680, the primary electron donor of PSII as well as several subsequent electron acceptors. The sequence is that of Photosystem II protein D1 from Chara vulgaris (Common stonewort).